A 508-amino-acid chain; its full sequence is p-aminobenzoyl-glutamate transport protein (508 aa).

The next 13 membrane-spanning stretches (helical) occupy residues 30 to 50, 85 to 105, 121 to 139, 140 to 159, 164 to 184, 211 to 231, 261 to 281, 303 to 323, 343 to 363, 382 to 402, 405 to 425, 439 to 459, and 479 to 499; these read FLLF…LSAF, FSGF…GLAE, VNAR…FSHI, SSDA…FLAV, VAGL…NLLI, IDNW…GGLI, GLRI…LMVI, GIVP…GIAT, MAGF…FNWS, LSGI…CMFI, GSAI…LLGF, SSVL…GFLQ, and LIFL…GLPI.

It is found in the cell inner membrane. It catalyses the reaction N-(4-aminobenzoyl)-L-glutamate(in) + H(+)(in) = N-(4-aminobenzoyl)-L-glutamate(out) + H(+)(out). With respect to regulation, completely inhibited by 100 nM sodium azide and by the proton ionophore carbonyl cyanide m-chlorophenylhydrazone (CCCP). Is also strongly inhibited by 100 mM potassium fluoride. Essential for aminobenzoyl-glutamate utilization. It catalyzes the concentration-dependent uptake of p-aminobenzoyl-glutamate (PABA-GLU) into the cell and allows accumulation of PABA-GLU to a concentration enabling AbgAB to catalyze cleavage into p-aminobenzoate and glutamate. It also seems to increase the sensitivity to low levels of aminobenzoyl-glutamate. May actually serve physiologically as a transporter for some other molecule, perhaps a dipeptide, and that it transports p-aminobenzoyl-glutamate as a secondary activity. The physiological role of abgABT should be clarified. In Escherichia coli (strain K12), this protein is p-aminobenzoyl-glutamate transport protein.